The primary structure comprises 550 residues: Calcyphosin-2 (550 aa).

2 disordered regions span residues Met-1–Ser-20 and Ile-175–Arg-198. A compositionally biased stretch (polar residues) spans Asp-181–Ser-190. 3 consecutive EF-hand domains span residues Arg-379–Glu-414, Val-415–Glu-452, and Tyr-453–Pro-488. Ca(2+) contacts are provided by Asp-466, Asn-468, Thr-470, and Asp-477.

The chain is Calcyphosin-2 (Caps2) from Mus musculus (Mouse).